A 152-amino-acid chain; its full sequence is Cell division protein SepF (152 aa).

Residues 23 to 32 (EVAREPEPMQ) are compositionally biased toward basic and acidic residues. A disordered region spans residues 23–42 (EVAREPEPMQKKTKKEKPSK).

The protein belongs to the SepF family. Homodimer. Interacts with FtsZ.

Its subcellular location is the cytoplasm. In terms of biological role, cell division protein that is part of the divisome complex and is recruited early to the Z-ring. Probably stimulates Z-ring formation, perhaps through the cross-linking of FtsZ protofilaments. Its function overlaps with FtsA. This Listeria welshimeri serovar 6b (strain ATCC 35897 / DSM 20650 / CCUG 15529 / CIP 8149 / NCTC 11857 / SLCC 5334 / V8) protein is Cell division protein SepF.